The primary structure comprises 480 residues: Probable cyclodipeptide synthase PUL1 (480 aa).

It functions in the pathway siderophore biosynthesis. Functionally, probable cyclodipeptide synthase; part of the PUL gene cluster that mediates the formation of pulcherrimin, a red iron-containing pigment composed of two cyclized and modified leucine molecules that acts as a siderophore, a chelator that binds iron outside the cell for subsequent uptake. Two leucine molecules are cyclized via a cyclodipeptide synthase, and the resulting diketopiperazine is oxidized by a cytochrome P450 monooxygenase to generate pulcherriminic acid (PA), which can then spontaneously bind iron to form pulcherrimin. The probable cyclodipeptide synthase PUL1 and the cytochrome P450 monooxygenase PUL2 encode the enzymes responsible for the two-step pulcherrimin biosynthesis pathway. In Kluyveromyces lactis (strain ATCC 8585 / CBS 2359 / DSM 70799 / NBRC 1267 / NRRL Y-1140 / WM37) (Yeast), this protein is Probable cyclodipeptide synthase PUL1.